The primary structure comprises 155 residues: Large ribosomal subunit protein uL16 (155 aa).

The segment at 1-22 is disordered; sequence MLSPKRTKYRKQQRGRMKGKAT.

It belongs to the universal ribosomal protein uL16 family. As to quaternary structure, part of the 50S ribosomal subunit.

In terms of biological role, binds 23S rRNA and is also seen to make contacts with the A and possibly P site tRNAs. In Synechococcus sp. (strain JA-2-3B'a(2-13)) (Cyanobacteria bacterium Yellowstone B-Prime), this protein is Large ribosomal subunit protein uL16.